A 582-amino-acid chain; its full sequence is Threonine--tRNA ligase (582 aa).

Positions 185-478 (DHRKLGKELE…LTEQYGGAFP (294 aa)) are catalytic. The Zn(2+) site is built by Cys278, His329, and His455.

It belongs to the class-II aminoacyl-tRNA synthetase family. As to quaternary structure, homodimer. It depends on Zn(2+) as a cofactor.

It is found in the cytoplasm. It catalyses the reaction tRNA(Thr) + L-threonine + ATP = L-threonyl-tRNA(Thr) + AMP + diphosphate + H(+). Catalyzes the attachment of threonine to tRNA(Thr) in a two-step reaction: L-threonine is first activated by ATP to form Thr-AMP and then transferred to the acceptor end of tRNA(Thr). Also edits incorrectly charged L-seryl-tRNA(Thr). In Dehalococcoides mccartyi (strain ATCC BAA-2266 / KCTC 15142 / 195) (Dehalococcoides ethenogenes (strain 195)), this protein is Threonine--tRNA ligase.